Consider the following 355-residue polypeptide: Protein RecA (355 aa).

66 to 73 (GPESSGKT) contacts ATP. Positions 331-355 (DVPEEDLPTTEDEQINILPDDSTEE) are disordered. The segment covering 332-344 (VPEEDLPTTEDEQ) has biased composition (acidic residues).

Belongs to the RecA family.

The protein resides in the cytoplasm. Its function is as follows. Can catalyze the hydrolysis of ATP in the presence of single-stranded DNA, the ATP-dependent uptake of single-stranded DNA by duplex DNA, and the ATP-dependent hybridization of homologous single-stranded DNAs. It interacts with LexA causing its activation and leading to its autocatalytic cleavage. In Latilactobacillus sakei subsp. sakei (strain 23K) (Lactobacillus sakei subsp. sakei), this protein is Protein RecA.